The sequence spans 227 residues: E3 ubiquitin-protein ligase ZNRF1 (227 aa).

Positions 1–42 (MGGKQSTAARSRGPFPGVSTDDSAVPPPGGAPHFGHYRTGGG) are disordered. Gly-2 carries N-myristoyl glycine lipidation. Positions 2–10 (GGKQSTAAR) are required for endosomal and lysosomal localization and myristoylation. Phosphoserine is present on residues Ser-50, Ser-52, and Ser-53. Residues 68–105 (PFGLYTPASRGTGDSERAPGGGGSASDSTYAHGNGYQE) form a disordered region. Tyr-103 carries the phosphotyrosine; by SRC modification. Ser-123 carries the post-translational modification Phosphoserine. The RING-type; atypical zinc finger occupies 184 to 225 (CVICLEELLQGDTIARLPCLCIYHKSCIDSWFEVNRSCPEHP).

In terms of assembly, interacts with AKT1, GLUL and TUBB2A. Interacts with ZNRF2. Interacts (via its RING domain) with UBE2N. Interacts (when phosphorylated) with YWHAE. In terms of processing, N-myristoylation targets ZNRF1 to intracellular membranes. Phosphorylated by SRC at Tyr-103; leading to 'Lys-63'-linked ubiquitination of TLR3, lysosomal trafficking and degradation. As to expression, expressed primarily in the nervous system, with expression higher in developing brain relative to adult. Expressed at low levels in testis and thymus.

It localises to the endosome. It is found in the lysosome. The protein localises to the membrane. Its subcellular location is the cytoplasmic vesicle. The protein resides in the secretory vesicle. It localises to the synaptic vesicle membrane. It carries out the reaction S-ubiquitinyl-[E2 ubiquitin-conjugating enzyme]-L-cysteine + [acceptor protein]-L-lysine = [E2 ubiquitin-conjugating enzyme]-L-cysteine + N(6)-ubiquitinyl-[acceptor protein]-L-lysine.. It functions in the pathway protein modification; protein ubiquitination. In terms of biological role, E3 ubiquitin-protein ligase that plays a role in different processes including cell differentiation, receptor recycling or regulation of inflammation. Mediates the ubiquitination of AKT1 and GLUL, thereby playing a role in neuron cells differentiation. Plays a role in the establishment and maintenance of neuronal transmission and plasticity. Regulates Schwann cells differentiation by mediating ubiquitination of GLUL. Promotes neurodegeneration by mediating 'Lys-48'-linked polyubiquitination and subsequent degradation of AKT1 in axons: degradation of AKT1 prevents AKT1-mediated phosphorylation of GSK3B, leading to GSK3B activation and phosphorylation of DPYSL2/CRMP2 followed by destabilization of microtubule assembly in axons. Ubiquitinates the Na(+)/K(+) ATPase alpha-1 subunit/ATP1A1 and thereby influences its endocytosis and/or degradation. Controls ligand-induced EGFR signaling via mediating receptor ubiquitination and recruitment of the ESCRT machinery. Acts as a negative feedback mechanism controlling TLR3 trafficking by mediating TLR3 'Lys-63'-linked polyubiquitination to reduce type I IFN production. Modulates inflammation by promoting caveolin-1/CAV1 ubiquitination and degradation to regulate TLR4-activated immune response. This chain is E3 ubiquitin-protein ligase ZNRF1 (ZNRF1), found in Homo sapiens (Human).